The sequence spans 337 residues: 6-phosphogluconolactonase (337 aa).

This sequence belongs to the cycloisomerase 2 family.

The catalysed reaction is 6-phospho-D-glucono-1,5-lactone + H2O = 6-phospho-D-gluconate + H(+). Its pathway is carbohydrate degradation; pentose phosphate pathway; D-ribulose 5-phosphate from D-glucose 6-phosphate (oxidative stage): step 2/3. Its function is as follows. Catalyzes the hydrolysis of 6-phosphogluconolactone to 6-phosphogluconate. The protein is 6-phosphogluconolactonase of Blochmanniella pennsylvanica (strain BPEN).